We begin with the raw amino-acid sequence, 880 residues long: Translation initiation factor IF-2 (880 aa).

The segment at 1–251 is disordered; the sequence is MVDTKNPGDK…PTAKPAPAKQ (251 aa). A compositionally biased stretch (low complexity) spans 58-79; it reads PADAPAAPAPVAAAKPAPVRAP. Residues 115–183 show a composition bias toward basic and acidic residues; it reads ARIRDEEERK…KRFGEEEAKK (69 aa). 2 stretches are compositionally biased toward low complexity: residues 184-215 and 233-250; these read AAAA…VAAD and AARP…APAK. A tr-type G domain is found at 376–547; that stretch reads PRSPVVTVMG…ALQAELLDLK (172 aa). The tract at residues 385–392 is G1; the sequence is GHVDHGKT. Residue 385-392 coordinates GTP; it reads GHVDHGKT. The interval 410 to 414 is G2; it reads GITQH. A G3 region spans residues 433-436; it reads DTPG. Residues 433-437 and 487-490 contribute to the GTP site; these read DTPGH and NKID. Residues 487–490 form a G4 region; sequence NKID. A G5 region spans residues 523-525; the sequence is SAK.

Belongs to the TRAFAC class translation factor GTPase superfamily. Classic translation factor GTPase family. IF-2 subfamily.

The protein resides in the cytoplasm. One of the essential components for the initiation of protein synthesis. Protects formylmethionyl-tRNA from spontaneous hydrolysis and promotes its binding to the 30S ribosomal subunits. Also involved in the hydrolysis of GTP during the formation of the 70S ribosomal complex. This chain is Translation initiation factor IF-2, found in Rhodopseudomonas palustris (strain BisB18).